We begin with the raw amino-acid sequence, 376 residues long: 23S rRNA (uracil(747)-C(5))-methyltransferase RlmC (376 aa).

Positions 3, 11, 14, and 87 each coordinate [4Fe-4S] cluster. Gln212, Phe241, Glu262, and Asn307 together coordinate S-adenosyl-L-methionine. Cys334 serves as the catalytic Nucleophile.

It belongs to the class I-like SAM-binding methyltransferase superfamily. RNA M5U methyltransferase family. RlmC subfamily.

It carries out the reaction uridine(747) in 23S rRNA + S-adenosyl-L-methionine = 5-methyluridine(747) in 23S rRNA + S-adenosyl-L-homocysteine + H(+). In terms of biological role, catalyzes the formation of 5-methyl-uridine at position 747 (m5U747) in 23S rRNA. This Salmonella typhimurium (strain LT2 / SGSC1412 / ATCC 700720) protein is 23S rRNA (uracil(747)-C(5))-methyltransferase RlmC.